The primary structure comprises 504 residues: Maturase K (504 aa).

Belongs to the intron maturase 2 family. MatK subfamily.

The protein localises to the plastid. It localises to the chloroplast. Its function is as follows. Usually encoded in the trnK tRNA gene intron. Probably assists in splicing its own and other chloroplast group II introns. The protein is Maturase K of Pentaplaris doroteae.